Consider the following 39-residue polypeptide: Potassium channel toxin alpha-KTx 2.18 (39 aa).

Disulfide bonds link Cys-7–Cys-29, Cys-13–Cys-34, and Cys-17–Cys-36. Ile-39 carries the post-translational modification Isoleucine amide.

This sequence belongs to the short scorpion toxin superfamily. Potassium channel inhibitor family. Alpha-KTx 02 subfamily. As to expression, expressed by the venom gland.

Its subcellular location is the secreted. Weakly blocks Kv1.3/KCNA3 voltage-gated potassium channels. The chain is Potassium channel toxin alpha-KTx 2.18 from Centruroides limpidus (Mexican scorpion).